A 156-amino-acid chain; its full sequence is Ribosomal RNA large subunit methyltransferase H (156 aa).

S-adenosyl-L-methionine contacts are provided by residues leucine 73, glycine 104, and 123–128 (LSPLTL).

It belongs to the RNA methyltransferase RlmH family. In terms of assembly, homodimer.

Its subcellular location is the cytoplasm. The catalysed reaction is pseudouridine(1915) in 23S rRNA + S-adenosyl-L-methionine = N(3)-methylpseudouridine(1915) in 23S rRNA + S-adenosyl-L-homocysteine + H(+). In terms of biological role, specifically methylates the pseudouridine at position 1915 (m3Psi1915) in 23S rRNA. In Pseudoalteromonas atlantica (strain T6c / ATCC BAA-1087), this protein is Ribosomal RNA large subunit methyltransferase H.